The following is a 448-amino-acid chain: Adenylosuccinate synthetase (448 aa).

Residues 22-28 (GDEGKGK) and 50-52 (GHT) each bind GTP. Asp-23 serves as the catalytic Proton acceptor. Positions 23 and 50 each coordinate Mg(2+). IMP contacts are provided by residues 23-26 (DEGK), 48-51 (NAGH), Thr-139, Arg-153, Gln-234, Thr-249, and Arg-321. Residue His-51 is the Proton donor of the active site. A substrate-binding site is contributed by 317–323 (SVTGRPR). Residues Arg-323, 349–351 (KLD), and 431–433 (STG) contribute to the GTP site.

This sequence belongs to the adenylosuccinate synthetase family. In terms of assembly, homodimer. Requires Mg(2+) as cofactor.

The protein localises to the cytoplasm. It catalyses the reaction IMP + L-aspartate + GTP = N(6)-(1,2-dicarboxyethyl)-AMP + GDP + phosphate + 2 H(+). Its pathway is purine metabolism; AMP biosynthesis via de novo pathway; AMP from IMP: step 1/2. Functionally, plays an important role in the de novo pathway of purine nucleotide biosynthesis. Catalyzes the first committed step in the biosynthesis of AMP from IMP. The sequence is that of Adenylosuccinate synthetase from Paraburkholderia phymatum (strain DSM 17167 / CIP 108236 / LMG 21445 / STM815) (Burkholderia phymatum).